The primary structure comprises 360 residues: Glutamate 5-kinase (360 aa).

Lys7 provides a ligand contact to ATP. Substrate contacts are provided by Ser47, Asp134, and Asn146. ATP is bound by residues 166–167 and 210–216; these read TD and TGGITTK. In terms of domain architecture, PUA spans 275–348; sequence VGQITLDEGA…LNKKENINSS (74 aa).

Belongs to the glutamate 5-kinase family.

The protein resides in the cytoplasm. It carries out the reaction L-glutamate + ATP = L-glutamyl 5-phosphate + ADP. Its pathway is amino-acid biosynthesis; L-proline biosynthesis; L-glutamate 5-semialdehyde from L-glutamate: step 1/2. Catalyzes the transfer of a phosphate group to glutamate to form L-glutamate 5-phosphate. This Prochlorococcus marinus subsp. pastoris (strain CCMP1986 / NIES-2087 / MED4) protein is Glutamate 5-kinase.